Reading from the N-terminus, the 426-residue chain is 3-phosphoshikimate 1-carboxyvinyltransferase (426 aa).

3-phosphoshikimate is bound by residues Lys-22, Ser-23, and Arg-27. Lys-22 provides a ligand contact to phosphoenolpyruvate. Phosphoenolpyruvate-binding residues include Gly-96 and Arg-124. Residues Ser-170, Ser-171, Gln-172, Ser-198, Asp-314, Asn-337, and Lys-341 each coordinate 3-phosphoshikimate. Gln-172 provides a ligand contact to phosphoenolpyruvate. The active-site Proton acceptor is the Asp-314. Positions 345, 387, and 412 each coordinate phosphoenolpyruvate.

Belongs to the EPSP synthase family. In terms of assembly, monomer.

The protein resides in the cytoplasm. It catalyses the reaction 3-phosphoshikimate + phosphoenolpyruvate = 5-O-(1-carboxyvinyl)-3-phosphoshikimate + phosphate. It functions in the pathway metabolic intermediate biosynthesis; chorismate biosynthesis; chorismate from D-erythrose 4-phosphate and phosphoenolpyruvate: step 6/7. Catalyzes the transfer of the enolpyruvyl moiety of phosphoenolpyruvate (PEP) to the 5-hydroxyl of shikimate-3-phosphate (S3P) to produce enolpyruvyl shikimate-3-phosphate and inorganic phosphate. This is 3-phosphoshikimate 1-carboxyvinyltransferase from Shewanella sp. (strain W3-18-1).